The sequence spans 448 residues: Probable glycine dehydrogenase (decarboxylating) subunit 1 (448 aa).

This sequence belongs to the GcvP family. N-terminal subunit subfamily. The glycine cleavage system is composed of four proteins: P, T, L and H. In this organism, the P 'protein' is a heterodimer of two subunits.

It carries out the reaction N(6)-[(R)-lipoyl]-L-lysyl-[glycine-cleavage complex H protein] + glycine + H(+) = N(6)-[(R)-S(8)-aminomethyldihydrolipoyl]-L-lysyl-[glycine-cleavage complex H protein] + CO2. Its function is as follows. The glycine cleavage system catalyzes the degradation of glycine. The P protein binds the alpha-amino group of glycine through its pyridoxal phosphate cofactor; CO(2) is released and the remaining methylamine moiety is then transferred to the lipoamide cofactor of the H protein. The chain is Probable glycine dehydrogenase (decarboxylating) subunit 1 from Geobacillus kaustophilus (strain HTA426).